The primary structure comprises 219 residues: RNA chaperone ProQ (219 aa).

Residues 102 to 160 (TLKESQDKAKAKRAERSKDEGDAADKAPRKPKRKPQPQARRDAKPAAKDKPKAAPKAPA) are disordered. Basic and acidic residues-rich tracts occupy residues 105 to 129 (ESQDKAKAKRAERSKDEGDAADKAP) and 140 to 153 (ARRDAKPAAKDKPK).

The protein belongs to the ProQ family.

It localises to the cytoplasm. In terms of biological role, RNA chaperone with significant RNA binding, RNA strand exchange and RNA duplexing activities. In Shewanella amazonensis (strain ATCC BAA-1098 / SB2B), this protein is RNA chaperone ProQ.